The primary structure comprises 339 residues: Tetraacyldisaccharide 4'-kinase (339 aa).

Residue 58–65 coordinates ATP; that stretch reads TVGGSGKT.

It belongs to the LpxK family.

The enzyme catalyses a lipid A disaccharide + ATP = a lipid IVA + ADP + H(+). It participates in glycolipid biosynthesis; lipid IV(A) biosynthesis; lipid IV(A) from (3R)-3-hydroxytetradecanoyl-[acyl-carrier-protein] and UDP-N-acetyl-alpha-D-glucosamine: step 6/6. Transfers the gamma-phosphate of ATP to the 4'-position of a tetraacyldisaccharide 1-phosphate intermediate (termed DS-1-P) to form tetraacyldisaccharide 1,4'-bis-phosphate (lipid IVA). The chain is Tetraacyldisaccharide 4'-kinase from Shewanella baltica (strain OS185).